The chain runs to 569 residues: MSFSMSRRQYADMFGPTTGDCIRLADTDLWIEIEHDYTVYGDEVKFGGGKVIRDGMGQHPLATRDEAVDLVLTNAVIVDYTGIYKADIGIKDGNIAAIGKAGNPLLMDGVNIVIGASTEVIAAEGKIVTAGGVDAHIHFICPQQIETALSSGITTMIGGGTGPATGTNATTCTPGEWNIYRMLEAAEAFPMNIGFLGKGNASAKEPIAEQVRAGAIGLKLHEDWGTTAAAIDACLRVADEYDVQVAIHTDTLNEGGFVEHTLKAINGRVIHTYHTEGAGGGHAPDIMKVASFPNILPSSTNPTRPYTKNTLDEHLDMLMVCHHLDPSVPEDIAFADSRIRKETIAAEDILHDIGAFSMISSDSQAMGRVGEVILRTWQTADKMKKQFGRLPEETGRGDNVRVKRYVAKYTINPAITHGIAEYVGSVEVGKFADLVVWHPAFFGVKPELVIKGGMIAYSVMGDPNASIPTPQPALYRPMFASYGAAIAKTSITFLSKAAFERGIPDKLGLHKIVKPVGNIRSLTKNDMVFNNAMLQIDVDPQTYEVKVDGRLITCEPAEVVAMAQRYFLF.

In terms of domain architecture, Urease spans 131-569; sequence GGVDAHIHFI…VAMAQRYFLF (439 aa). Positions 136, 138, and 219 each coordinate Ni(2+). An N6-carboxylysine modification is found at Lys219. His221 serves as a coordination point for substrate. Ni(2+) is bound by residues His248 and His274. Catalysis depends on His322, which acts as the Proton donor. Ni(2+) is bound at residue Asp362.

This sequence belongs to the metallo-dependent hydrolases superfamily. Urease alpha subunit family. In terms of assembly, heterotrimer of UreA (gamma), UreB (beta) and UreC (alpha) subunits. Three heterotrimers associate to form the active enzyme. The cofactor is Ni cation. Carboxylation allows a single lysine to coordinate two nickel ions.

It is found in the cytoplasm. It catalyses the reaction urea + 2 H2O + H(+) = hydrogencarbonate + 2 NH4(+). Its pathway is nitrogen metabolism; urea degradation; CO(2) and NH(3) from urea (urease route): step 1/1. The sequence is that of Urease subunit alpha from Geobacillus kaustophilus (strain HTA426).